Reading from the N-terminus, the 72-residue chain is Translation initiation factor IF-1 (72 aa).

The S1-like domain occupies 1–72 (MSKSDYIELE…TKGRITFRHK (72 aa)).

This sequence belongs to the IF-1 family. As to quaternary structure, component of the 30S ribosomal translation pre-initiation complex which assembles on the 30S ribosome in the order IF-2 and IF-3, IF-1 and N-formylmethionyl-tRNA(fMet); mRNA recruitment can occur at any time during PIC assembly.

It is found in the cytoplasm. Its function is as follows. One of the essential components for the initiation of protein synthesis. Stabilizes the binding of IF-2 and IF-3 on the 30S subunit to which N-formylmethionyl-tRNA(fMet) subsequently binds. Helps modulate mRNA selection, yielding the 30S pre-initiation complex (PIC). Upon addition of the 50S ribosomal subunit IF-1, IF-2 and IF-3 are released leaving the mature 70S translation initiation complex. This chain is Translation initiation factor IF-1, found in Vesicomyosocius okutanii subsp. Calyptogena okutanii (strain HA).